Reading from the N-terminus, the 263-residue chain is Small ribosomal subunit protein eS4, Y isoform 1 (263 aa).

One can recognise an S4 RNA-binding domain in the interval 42–104; it reads LPLIVFLRNR…TGEHFRLVYD (63 aa).

Belongs to the eukaryotic ribosomal protein eS4 family.

The polypeptide is Small ribosomal subunit protein eS4, Y isoform 1 (RPS4Y1) (Homo sapiens (Human)).